Reading from the N-terminus, the 356-residue chain is MDANVLIMAGGTGGHVFPALACAREFQARGYKVHWLGTPRGIENELVPQAGLTLHLINVTGLRGKGRLSLLKAPLMLLKALMQARKVVRQVKPVCVVGFGGYVTGPGGLAAKLAGVPLIIHEQNAVAGTANRSLASFASRVCEAFPNTFADSSKRRTTGNPVRVELFLETPRQALAGRKARLLVLGGSLGAEPLNKLLPEALSQLPQDIQPEVFHQSGKNHDAVTAERYRNVGVEAQVAPFIQNMAQAYGWADLVVCRAGALTISELAAAGLPSLLIPLPHAIDDHQSRNADYLAREGAAFVMPQATTGAAEMAARLKEVLMQPEQLNSMARTARSLAKPDATRTVVNVCVEVAHG.

UDP-N-acetyl-alpha-D-glucosamine-binding positions include 12–14, N124, R163, S188, I242, and Q287; that span reads TGG.

The protein belongs to the glycosyltransferase 28 family. MurG subfamily.

Its subcellular location is the cell inner membrane. It catalyses the reaction di-trans,octa-cis-undecaprenyl diphospho-N-acetyl-alpha-D-muramoyl-L-alanyl-D-glutamyl-meso-2,6-diaminopimeloyl-D-alanyl-D-alanine + UDP-N-acetyl-alpha-D-glucosamine = di-trans,octa-cis-undecaprenyl diphospho-[N-acetyl-alpha-D-glucosaminyl-(1-&gt;4)]-N-acetyl-alpha-D-muramoyl-L-alanyl-D-glutamyl-meso-2,6-diaminopimeloyl-D-alanyl-D-alanine + UDP + H(+). It participates in cell wall biogenesis; peptidoglycan biosynthesis. Its function is as follows. Cell wall formation. Catalyzes the transfer of a GlcNAc subunit on undecaprenyl-pyrophosphoryl-MurNAc-pentapeptide (lipid intermediate I) to form undecaprenyl-pyrophosphoryl-MurNAc-(pentapeptide)GlcNAc (lipid intermediate II). The chain is UDP-N-acetylglucosamine--N-acetylmuramyl-(pentapeptide) pyrophosphoryl-undecaprenol N-acetylglucosamine transferase from Pseudomonas syringae pv. syringae (strain B728a).